The chain runs to 355 residues: Countin-like protein (355 aa).

An N-terminal signal peptide occupies residues 1-27 (MNKSLFSLILLIITIFNLASNINIVSA). The interval 63 to 83 (NNHEDNNNNNNNNNNNNNAYN) is disordered. The span at 69–83 (NNNNNNNNNNNNAYN) shows a compositional bias: low complexity. One can recognise a Saposin B-type domain in the interval 93–177 (GDIECVVCLD…ELITACSTPK (85 aa)). Disulfide bonds link Cys97–Cys173, Cys100–Cys167, and Cys128–Cys140. N-linked (GlcNAc...) asparagine glycans are attached at residues Asn132, Asn209, Asn242, Asn253, Asn254, Asn282, and Asn303. The segment at 290–355 (ISNPTPTPTP…SSHYKNKINK (66 aa)) is disordered. The segment covering 301 to 342 (PSNSTTPTPTPTNSTPTPTSTSTPTSTPTSTPTPTPTSSSST) has biased composition (low complexity). Residues 345-355 (HSSHYKNKINK) show a composition bias toward basic residues.

Belongs to the countin family.

The protein resides in the secreted. This Dictyostelium discoideum (Social amoeba) protein is Countin-like protein.